Here is a 341-residue protein sequence, read N- to C-terminus: UDP-3-O-acylglucosamine N-acyltransferase (341 aa).

The active-site Proton acceptor is H241.

The protein belongs to the transferase hexapeptide repeat family. LpxD subfamily. In terms of assembly, homotrimer.

The catalysed reaction is a UDP-3-O-[(3R)-3-hydroxyacyl]-alpha-D-glucosamine + a (3R)-hydroxyacyl-[ACP] = a UDP-2-N,3-O-bis[(3R)-3-hydroxyacyl]-alpha-D-glucosamine + holo-[ACP] + H(+). Its pathway is bacterial outer membrane biogenesis; LPS lipid A biosynthesis. In terms of biological role, catalyzes the N-acylation of UDP-3-O-acylglucosamine using 3-hydroxyacyl-ACP as the acyl donor. Is involved in the biosynthesis of lipid A, a phosphorylated glycolipid that anchors the lipopolysaccharide to the outer membrane of the cell. This chain is UDP-3-O-acylglucosamine N-acyltransferase, found in Mannheimia succiniciproducens (strain KCTC 0769BP / MBEL55E).